Here is a 117-residue protein sequence, read N- to C-terminus: Immunoglobulin heavy variable 3-11 (117 aa).

The signal sequence occupies residues 1–19 (MEFGLSWVFLVAIIKGVQC). Gln-20 bears the Pyrrolidone carboxylic acid mark. Positions 20–44 (QVQLVESGGGLVKPGGSLRLSCAAS) are framework-1. The 98-residue stretch at 20-117 (QVQLVESGGG…EDTAVYYCAR (98 aa)) folds into the Ig-like domain. Cysteines 41 and 115 form a disulfide. The interval 45-52 (GFTFSDYY) is complementarity-determining-1. The segment at 53–69 (MSWIRQAPGKGLEWVSY) is framework-2. Positions 70–77 (ISSSSSYT) are complementarity-determining-2. The segment at 78 to 115 (NYADSVKGRFTISRDNAKNSLYLQMNSLRAEDTAVYYC) is framework-3. The tract at residues 116–117 (AR) is complementarity-determining-3.

As to quaternary structure, immunoglobulins are composed of two identical heavy chains and two identical light chains; disulfide-linked.

The protein localises to the secreted. It is found in the cell membrane. Its function is as follows. V region of the variable domain of immunoglobulin heavy chains that participates in the antigen recognition. Immunoglobulins, also known as antibodies, are membrane-bound or secreted glycoproteins produced by B lymphocytes. In the recognition phase of humoral immunity, the membrane-bound immunoglobulins serve as receptors which, upon binding of a specific antigen, trigger the clonal expansion and differentiation of B lymphocytes into immunoglobulins-secreting plasma cells. Secreted immunoglobulins mediate the effector phase of humoral immunity, which results in the elimination of bound antigens. The antigen binding site is formed by the variable domain of one heavy chain, together with that of its associated light chain. Thus, each immunoglobulin has two antigen binding sites with remarkable affinity for a particular antigen. The variable domains are assembled by a process called V-(D)-J rearrangement and can then be subjected to somatic hypermutations which, after exposure to antigen and selection, allow affinity maturation for a particular antigen. This is Immunoglobulin heavy variable 3-11 from Homo sapiens (Human).